Reading from the N-terminus, the 84-residue chain is Beta-cardiotoxin CTX9 (84 aa).

The N-terminal stretch at 1–21 (MKTLLLTLVVVTIVCLDLGYT) is a signal peptide. 4 disulfides stabilise this stretch: Cys-24/Cys-43, Cys-36/Cys-61, Cys-65/Cys-76, and Cys-77/Cys-82.

Belongs to the three-finger toxin family. Short-chain subfamily. Aminergic toxin sub-subfamily. As to expression, expressed by the venom gland.

The protein localises to the secreted. Acts as a beta-blocker by binding to beta-1 and beta-2 adrenergic receptors (ADRB1 and ADRB2). It dose-dependently decreases the heart rate (bradycardia), whereas conventional cardiotoxins increases it. At 100 mg/kg, intraperitoneal injection into mice provokes labored breathing, impaired locomotion, lack of response to external stimuli, and death (after 30 minutes). The chain is Beta-cardiotoxin CTX9 from Ophiophagus hannah (King cobra).